Reading from the N-terminus, the 122-residue chain is V-type ATPase assembly factor PKR1 (122 aa).

Topologically, residues Met-1–Gln-20 are cytoplasmic. The helical transmembrane segment at Leu-21 to Tyr-41 threads the bilayer. At Ala-42–Asn-46 the chain is on the lumenal side. A helical membrane pass occupies residues Ile-47–Ile-67. Topologically, residues Asn-68–Ala-122 are cytoplasmic. A compositionally biased stretch (basic and acidic residues) spans Asp-82–Ser-103. The tract at residues Asp-82–Ala-122 is disordered. The segment covering Gly-104–Ala-122 has biased composition (polar residues).

The protein belongs to the PKR1 family.

It localises to the endoplasmic reticulum membrane. In terms of biological role, functions together with the other V-type ATPase assembly factors in the endoplasmic reticulum to efficiently assemble the V-type ATPase membrane sector V(0). This Saccharomyces cerevisiae (strain ATCC 204508 / S288c) (Baker's yeast) protein is V-type ATPase assembly factor PKR1 (PKR1).